Consider the following 339-residue polypeptide: Probable long-chain-alcohol O-fatty-acyltransferase 7 (339 aa).

The next 7 helical transmembrane spans lie at 7-27 (SLIN…CLPP), 39-59 (IFPV…SIFT), 113-133 (HLST…LYVH), 143-163 (FLLC…LTLL), 226-246 (MLIG…VVFF), 254-274 (TGEV…EVAA), and 287-307 (PVVS…WLFF).

This sequence belongs to the wax synthase family.

Its subcellular location is the membrane. It catalyses the reaction a long chain fatty alcohol + a fatty acyl-CoA = a wax ester + CoA. Its function is as follows. Catalyzes the final step in the synthesis of long-chain linear esters (waxes). In Arabidopsis thaliana (Mouse-ear cress), this protein is Probable long-chain-alcohol O-fatty-acyltransferase 7 (AT7).